The following is a 302-amino-acid chain: Recombination-associated protein RdgC (302 aa).

This sequence belongs to the RdgC family.

Its subcellular location is the cytoplasm. It localises to the nucleoid. Its function is as follows. May be involved in recombination. The sequence is that of Recombination-associated protein RdgC from Proteus mirabilis (strain HI4320).